We begin with the raw amino-acid sequence, 156 residues long: RNA polymerase sigma factor SigS (156 aa).

A Polymerase core binding motif is present at residues glutamate 29–isoleucine 44. Positions glutamine 126–threonine 145 form a DNA-binding region, H-T-H motif.

The protein belongs to the sigma-70 factor family.

Functionally, sigma factors are initiation factors that promote the attachment of RNA polymerase to specific initiation sites and are then released. Sigma-S contributes to the protection against external stress, thus playing a role in cellular fitness and survival. This is RNA polymerase sigma factor SigS (sigS) from Staphylococcus aureus (strain bovine RF122 / ET3-1).